A 177-amino-acid chain; its full sequence is Peptide methionine sulfoxide reductase MsrA (177 aa).

Residue cysteine 15 is part of the active site.

Belongs to the MsrA Met sulfoxide reductase family.

The enzyme catalyses L-methionyl-[protein] + [thioredoxin]-disulfide + H2O = L-methionyl-(S)-S-oxide-[protein] + [thioredoxin]-dithiol. It carries out the reaction [thioredoxin]-disulfide + L-methionine + H2O = L-methionine (S)-S-oxide + [thioredoxin]-dithiol. In terms of biological role, has an important function as a repair enzyme for proteins that have been inactivated by oxidation. Catalyzes the reversible oxidation-reduction of methionine sulfoxide in proteins to methionine. The sequence is that of Peptide methionine sulfoxide reductase MsrA from Listeria monocytogenes serotype 4b (strain CLIP80459).